Here is a 409-residue protein sequence, read N- to C-terminus: Serine/threonine transporter SstT (409 aa).

The next 9 membrane-spanning stretches (helical) occupy residues 14 to 34, 57 to 77, 89 to 109, 149 to 169, 190 to 210, 224 to 244, 296 to 316, 338 to 358, and 365 to 385; these read GNLI…GFIA, GALK…SIII, IIIL…VVSF, AISS…GIAL, IVKF…ATSV, LLLV…AAIV, ISIP…IAVL, IIAA…LMLI, and FGIS…IGVV.

This sequence belongs to the dicarboxylate/amino acid:cation symporter (DAACS) (TC 2.A.23) family.

It is found in the cell inner membrane. The enzyme catalyses L-serine(in) + Na(+)(in) = L-serine(out) + Na(+)(out). The catalysed reaction is L-threonine(in) + Na(+)(in) = L-threonine(out) + Na(+)(out). Its function is as follows. Involved in the import of serine and threonine into the cell, with the concomitant import of sodium (symport system). The protein is Serine/threonine transporter SstT of Campylobacter fetus subsp. fetus (strain 82-40).